We begin with the raw amino-acid sequence, 358 residues long: Holliday junction branch migration complex subunit RuvB (358 aa).

Residues 1 to 24 (MAIKRSHNSPPATEENLLTPNPTI) are disordered. A compositionally biased stretch (polar residues) spans 8–22 (NSPPATEENLLTPNP). The tract at residues 13-195 (TEENLLTPNP…FGLIQRLRFY (183 aa)) is large ATPase domain (RuvB-L). Residues Ile-34, Arg-35, Gly-76, Lys-79, Thr-80, Thr-81, 142–144 (EDY), Arg-185, Tyr-195, and Arg-232 contribute to the ATP site. A Mg(2+)-binding site is contributed by Thr-80. Residues 196–266 (AVEELTAIIL…LAAEGLNQLN (71 aa)) form a small ATPAse domain (RuvB-S) region. Residues 269 to 358 (SMGLDWTDRL…KDRSLPLFEF (90 aa)) form a head domain (RuvB-H) region. Positions 324 and 329 each coordinate DNA.

It belongs to the RuvB family. As to quaternary structure, homohexamer. Forms an RuvA(8)-RuvB(12)-Holliday junction (HJ) complex. HJ DNA is sandwiched between 2 RuvA tetramers; dsDNA enters through RuvA and exits via RuvB. An RuvB hexamer assembles on each DNA strand where it exits the tetramer. Each RuvB hexamer is contacted by two RuvA subunits (via domain III) on 2 adjacent RuvB subunits; this complex drives branch migration. In the full resolvosome a probable DNA-RuvA(4)-RuvB(12)-RuvC(2) complex forms which resolves the HJ.

The protein resides in the cytoplasm. The catalysed reaction is ATP + H2O = ADP + phosphate + H(+). The RuvA-RuvB-RuvC complex processes Holliday junction (HJ) DNA during genetic recombination and DNA repair, while the RuvA-RuvB complex plays an important role in the rescue of blocked DNA replication forks via replication fork reversal (RFR). RuvA specifically binds to HJ cruciform DNA, conferring on it an open structure. The RuvB hexamer acts as an ATP-dependent pump, pulling dsDNA into and through the RuvAB complex. RuvB forms 2 homohexamers on either side of HJ DNA bound by 1 or 2 RuvA tetramers; 4 subunits per hexamer contact DNA at a time. Coordinated motions by a converter formed by DNA-disengaged RuvB subunits stimulates ATP hydrolysis and nucleotide exchange. Immobilization of the converter enables RuvB to convert the ATP-contained energy into a lever motion, pulling 2 nucleotides of DNA out of the RuvA tetramer per ATP hydrolyzed, thus driving DNA branch migration. The RuvB motors rotate together with the DNA substrate, which together with the progressing nucleotide cycle form the mechanistic basis for DNA recombination by continuous HJ branch migration. Branch migration allows RuvC to scan DNA until it finds its consensus sequence, where it cleaves and resolves cruciform DNA. This is Holliday junction branch migration complex subunit RuvB from Microcystis aeruginosa (strain NIES-843 / IAM M-2473).